The chain runs to 561 residues: Putative transport protein YbjL (561 aa).

5 consecutive transmembrane segments (helical) span residues 8–28 (LLNG…LCLG), 32–52 (LGSV…LLGQ), 66–86 (FMLF…SIFF), 94–114 (MLAL…GKLF), and 158–178 (NLSL…IVGA). 2 consecutive RCK C-terminal domains span residues 200–288 (RGLD…SFRN) and 292–373 (VFDR…RIGF). The next 5 helical transmembrane spans lie at 383 to 403 (LLAF…TFQF), 406 to 426 (FSFG…LGFL), 447 to 467 (FGLM…ISNG), 475 to 495 (MLIA…LFGA), and 540 to 560 (AIAN…WPGL).

Belongs to the AAE transporter (TC 2.A.81) family. YbjL subfamily.

Its subcellular location is the cell membrane. The chain is Putative transport protein YbjL from Salmonella typhi.